Here is a 104-residue protein sequence, read N- to C-terminus: Large ribosomal subunit protein uL23 (104 aa).

It belongs to the universal ribosomal protein uL23 family. In terms of assembly, part of the 50S ribosomal subunit. Contacts protein L29, and trigger factor when it is bound to the ribosome.

Functionally, one of the early assembly proteins it binds 23S rRNA. One of the proteins that surrounds the polypeptide exit tunnel on the outside of the ribosome. Forms the main docking site for trigger factor binding to the ribosome. This chain is Large ribosomal subunit protein uL23, found in Ralstonia pickettii (strain 12J).